We begin with the raw amino-acid sequence, 934 residues long: Rab GTPase-activating protein tbc-11 (934 aa).

Residues 16 to 134 form the PID domain; that stretch reads VQYLGCSQLV…SKAETAAKAL (119 aa). The interval 337 to 383 is disordered; that stretch reads FISLESDSDRKRSKQNLGKSPSRMPTQLLHPTGDDESDCDEPLLSGS. Residues 351 to 361 show a composition bias toward polar residues; that stretch reads QNLGKSPSRMP. Positions 422–612 constitute a Rab-GAP TBC domain; it reads GIPDKLRGRV…FILDLFLSQG (191 aa). Coiled-coil stretches lie at residues 727-800 and 861-895; these read KIEL…YKKL and LEEREDHIKNLEIDLAQTKLSLVEAECRNQDLTHQ.

In terms of biological role, rab GTPase activating protein for the small GTPases rab-6.1 and rab-6.2. Probably acts through rab-6.1 and rab-6.2 to play a role in microRNA-mediated gene silencing in different tissue types. Required for seam cell division and alae formation. In Caenorhabditis elegans, this protein is Rab GTPase-activating protein tbc-11.